Reading from the N-terminus, the 431-residue chain is Enolase (431 aa).

Position 162 (Gln162) interacts with (2R)-2-phosphoglycerate. The active-site Proton donor is the Glu204. Positions 241, 284, and 311 each coordinate Mg(2+). (2R)-2-phosphoglycerate is bound by residues Lys336, Arg365, Ser366, and Lys387. Lys336 functions as the Proton acceptor in the catalytic mechanism.

This sequence belongs to the enolase family. Requires Mg(2+) as cofactor.

Its subcellular location is the cytoplasm. The protein resides in the secreted. The protein localises to the cell surface. The enzyme catalyses (2R)-2-phosphoglycerate = phosphoenolpyruvate + H2O. The protein operates within carbohydrate degradation; glycolysis; pyruvate from D-glyceraldehyde 3-phosphate: step 4/5. Its function is as follows. Catalyzes the reversible conversion of 2-phosphoglycerate (2-PG) into phosphoenolpyruvate (PEP). It is essential for the degradation of carbohydrates via glycolysis. This chain is Enolase, found in Sorangium cellulosum (strain So ce56) (Polyangium cellulosum (strain So ce56)).